A 152-amino-acid chain; its full sequence is MEEDEVAESWEEAADSGEIDRRLEKKLKISQRENSKSKSPPKAPVVIQDDSLPSGPPPQIRILKRPTSNGLASNPNACSRPAAPVKSLAQREAEYAEARKRILGSASPEEEQEKPVADRPARINQAEEIRQPNNVIRQPLGPDGSQGFRQRR.

Positions 28–152 are disordered; that stretch reads KISQRENSKS…DGSQGFRQRR (125 aa). The region spanning 42-107 is the SUZ domain; that stretch reads KAPVVIQDDS…ARKRILGSAS (66 aa). Positions 66-77 are enriched in polar residues; it reads PTSNGLASNPNA. Composition is skewed to basic and acidic residues over residues 89-100 and 113-130; these read AQREAEYAEARK and EKPV…EEIR. The 42-residue stretch at 111–152 folds into the SUZ-C domain; the sequence is EQEKPVADRPARINQAEEIRQPNNVIRQPLGPDGSQGFRQRR.

It belongs to the SZRD1 family.

This Xenopus tropicalis (Western clawed frog) protein is SUZ RNA-binding domain-containing (szrd1).